The sequence spans 334 residues: tRNA N6-adenosine threonylcarbamoyltransferase (334 aa).

Fe cation-binding residues include H111 and H115. Residues 134-138 (IVSGG), D167, G180, D184, and N272 each bind substrate. D300 serves as a coordination point for Fe cation.

Belongs to the KAE1 / TsaD family. Requires Fe(2+) as cofactor.

The protein resides in the cytoplasm. The enzyme catalyses L-threonylcarbamoyladenylate + adenosine(37) in tRNA = N(6)-L-threonylcarbamoyladenosine(37) in tRNA + AMP + H(+). Required for the formation of a threonylcarbamoyl group on adenosine at position 37 (t(6)A37) in tRNAs that read codons beginning with adenine. Is involved in the transfer of the threonylcarbamoyl moiety of threonylcarbamoyl-AMP (TC-AMP) to the N6 group of A37, together with TsaE and TsaB. TsaD likely plays a direct catalytic role in this reaction. This is tRNA N6-adenosine threonylcarbamoyltransferase from Dictyoglomus turgidum (strain DSM 6724 / Z-1310).